A 137-amino-acid polypeptide reads, in one-letter code: Translation initiation factor 2 subunit beta (137 aa).

It belongs to the eIF-2-beta/eIF-5 family. In terms of assembly, heterotrimer composed of an alpha, a beta and a gamma chain.

In terms of biological role, eIF-2 functions in the early steps of protein synthesis by forming a ternary complex with GTP and initiator tRNA. The protein is Translation initiation factor 2 subunit beta (eif2b) of Archaeoglobus fulgidus (strain ATCC 49558 / DSM 4304 / JCM 9628 / NBRC 100126 / VC-16).